Here is a 484-residue protein sequence, read N- to C-terminus: 3-isopropylmalate dehydratase large subunit (484 aa).

Residues Cys-352, Cys-412, and Cys-415 each coordinate [4Fe-4S] cluster. The tract at residues 462–484 is disordered; that stretch reads GTLSSPSDLDPAPESAAVSSSAA.

This sequence belongs to the aconitase/IPM isomerase family. LeuC type 1 subfamily. Heterodimer of LeuC and LeuD. [4Fe-4S] cluster is required as a cofactor.

It catalyses the reaction (2R,3S)-3-isopropylmalate = (2S)-2-isopropylmalate. The protein operates within amino-acid biosynthesis; L-leucine biosynthesis; L-leucine from 3-methyl-2-oxobutanoate: step 2/4. In terms of biological role, catalyzes the isomerization between 2-isopropylmalate and 3-isopropylmalate, via the formation of 2-isopropylmaleate. The polypeptide is 3-isopropylmalate dehydratase large subunit (Arthrobacter sp. (strain FB24)).